The primary structure comprises 119 residues: Large ribosomal subunit protein bL20 (119 aa).

It belongs to the bacterial ribosomal protein bL20 family.

Functionally, binds directly to 23S ribosomal RNA and is necessary for the in vitro assembly process of the 50S ribosomal subunit. It is not involved in the protein synthesizing functions of that subunit. The polypeptide is Large ribosomal subunit protein bL20 (Erythrobacter litoralis (strain HTCC2594)).